The sequence spans 397 residues: Ubiquitin-like modifier-activating enzyme 5 (397 aa).

5 residues coordinate ATP: glycine 76, aspartate 97, lysine 120, asparagine 143, and asparagine 177. The Zn(2+) site is built by cysteine 219 and cysteine 222. Residue cysteine 243 is the Glycyl thioester intermediate of the active site. Residues cysteine 296 and cysteine 301 each coordinate Zn(2+). The short motif at 327 to 339 is the UFM1-interacting sequence (UIS) element; sequence IVHEDNDWGIELV. The segment at 340–370 is linker; it reads SETTEDELKAASGPVPDLPVGITVAYTIPNK. The short motif at 382-397 is the UFC1-binding sequence (UFC) element; that stretch reads ESEESLEDLMAKMRNL.

The protein belongs to the ubiquitin-activating E1 family. UBA5 subfamily. As to quaternary structure, homodimer; homodimerization is required for UFM1 activation. Interacts (via UIS motif) with UFM1; binds UFM1 via a trans-binding mechanism in which UFM1 interacts with distinct sites in both subunits of the UBA5 homodimer. Interacts (via C-terminus) with UFC1.

The protein resides in the cytoplasm. The protein localises to the nucleus. It localises to the endoplasmic reticulum membrane. It is found in the golgi apparatus. E1-like enzyme which specifically catalyzes the first step in ufmylation. Activates UFM1 by first adenylating its C-terminal glycine residue with ATP, and thereafter linking this residue to the side chain of a cysteine residue in E1, yielding a UFM1-E1 thioester and free AMP. Activates UFM1 via a trans-binding mechanism, in which UFM1 interacts with distinct sites in both subunits of the UBA5 homodimer. Trans-binding also promotes stabilization of the UBA5 homodimer, and enhances ATP-binding. Transfer of UFM1 from UBA5 to the E2-like enzyme UFC1 also takes place using a trans mechanism. Ufmylation plays a key role in various processes, such as ribosome recycling, response to DNA damage, interferon response or reticulophagy (also called ER-phagy). This is Ubiquitin-like modifier-activating enzyme 5 from Gallus gallus (Chicken).